Reading from the N-terminus, the 361-residue chain is 5-formaminoimidazole-4-carboxamide-1-(beta)-D-ribofuranosyl 5'-monophosphate synthetase (361 aa).

5-amino-1-(5-phospho-beta-D-ribosyl)imidazole-4-carboxamide is bound by residues H27 and S94. In terms of domain architecture, ATP-grasp spans 116–348; the sequence is RAILRWEAER…MGQRIAKEIK (233 aa). Residues 146-208 and E230 each bind ATP; that span reads PDDI…ANYC. N258 is a 5-amino-1-(5-phospho-beta-D-ribosyl)imidazole-4-carboxamide binding site. Mg(2+) is bound by residues Q297 and E310.

The protein belongs to the phosphohexose mutase family. Mg(2+) serves as cofactor. It depends on Mn(2+) as a cofactor.

It carries out the reaction 5-amino-1-(5-phospho-beta-D-ribosyl)imidazole-4-carboxamide + formate + ATP = 5-formamido-1-(5-phospho-D-ribosyl)imidazole-4-carboxamide + ADP + phosphate. Its pathway is purine metabolism; IMP biosynthesis via de novo pathway; 5-formamido-1-(5-phospho-D-ribosyl)imidazole-4-carboxamide from 5-amino-1-(5-phospho-D-ribosyl)imidazole-4-carboxamide (formate route): step 1/1. In terms of biological role, catalyzes the ATP- and formate-dependent formylation of 5-aminoimidazole-4-carboxamide-1-beta-d-ribofuranosyl 5'-monophosphate (AICAR) to 5-formaminoimidazole-4-carboxamide-1-beta-d-ribofuranosyl 5'-monophosphate (FAICAR) in the absence of folates. This Methanococcus maripaludis (strain C6 / ATCC BAA-1332) protein is 5-formaminoimidazole-4-carboxamide-1-(beta)-D-ribofuranosyl 5'-monophosphate synthetase.